We begin with the raw amino-acid sequence, 817 residues long: Collagen-like protein 4 (817 aa).

Collagen-like domains lie at Gly83–Asp142, Gly145–Asp264, and Gly268–Lys327. Disordered stretches follow at residues Asn87–Gly107, Phe120–Asp458, and Ile479–Ile543. Asn106 and Asn121 each carry an N-linked (GlcNAc...) asparagine; by host glycan. Composition is skewed to basic and acidic residues over residues Ile126–Gln141 and Gln149–Ile161. N-linked (GlcNAc...) asparagine; by host glycosylation is present at Asn183. 2 stretches are compositionally biased toward basic and acidic residues: residues Ile212–Ile224 and Ser233–Thr245. Residues Lys246–Ser260 show a composition bias toward low complexity. The span at Lys294–Lys341 shows a compositional bias: basic and acidic residues. N-linked (GlcNAc...) asparagine; by host glycans are attached at residues Asn345 and Asn360. 2 Collagen-like domains span residues Gly352–Val411 and Gly430–Lys489. Basic and acidic residues-rich tracts occupy residues Lys354–Asp368, Ser377–Leu390, and Ser428–Asp458. Positions Ile480–Asn494 are enriched in low complexity. Residue Asn483 is glycosylated (N-linked (GlcNAc...) asparagine; by host). Composition is skewed to basic and acidic residues over residues Lys495 to Thr504, Ile515 to Lys525, and Glu533 to Ile543. In terms of domain architecture, Collagen-like 6 spans Thr512–Ser570. 3 N-linked (GlcNAc...) asparagine; by host glycosylation sites follow: Asn709, Asn712, and Asn715. A compositionally biased stretch (gly residues) spans Gly757–Gly771. Residues Gly757–Gly804 are disordered. An N-linked (GlcNAc...) asparagine; by host glycan is attached at Asn772.

Post-translationally, may be hydroxylated on lysine by the viral-encoded procollagen-lysine,2-oxoglutarate 5-dioxygenase.

Its subcellular location is the virion. In terms of biological role, may participate in the formation of a layer of cross-linked glycosylated fibrils at the viral surface thus giving it a hairy-like appearance. This Acanthamoeba polyphaga (Amoeba) protein is Collagen-like protein 4.